A 258-amino-acid chain; its full sequence is Thiazole synthase (258 aa).

K100 functions as the Schiff-base intermediate with DXP in the catalytic mechanism. 1-deoxy-D-xylulose 5-phosphate-binding positions include G161, 187–188 (AG), and 209–210 (NT).

The protein belongs to the ThiG family. In terms of assembly, homotetramer. Forms heterodimers with either ThiH or ThiS.

Its subcellular location is the cytoplasm. The catalysed reaction is [ThiS sulfur-carrier protein]-C-terminal-Gly-aminoethanethioate + 2-iminoacetate + 1-deoxy-D-xylulose 5-phosphate = [ThiS sulfur-carrier protein]-C-terminal Gly-Gly + 2-[(2R,5Z)-2-carboxy-4-methylthiazol-5(2H)-ylidene]ethyl phosphate + 2 H2O + H(+). The protein operates within cofactor biosynthesis; thiamine diphosphate biosynthesis. Functionally, catalyzes the rearrangement of 1-deoxy-D-xylulose 5-phosphate (DXP) to produce the thiazole phosphate moiety of thiamine. Sulfur is provided by the thiocarboxylate moiety of the carrier protein ThiS. In vitro, sulfur can be provided by H(2)S. This Campylobacter jejuni subsp. jejuni serotype O:23/36 (strain 81-176) protein is Thiazole synthase.